We begin with the raw amino-acid sequence, 510 residues long: GMP synthase [glutamine-hydrolyzing] (510 aa).

The 191-residue stretch at 5–195 folds into the Glutamine amidotransferase type-1 domain; sequence LVLVVDFGGQ…LFNVCNLKGD (191 aa). Cys82 functions as the Nucleophile in the catalytic mechanism. Residues His169 and Glu171 contribute to the active site. One can recognise a GMPS ATP-PPase domain in the interval 196–385; that stretch reads WSMSSFAEQQ…LGIPHKLVWR (190 aa). 223 to 229 is a binding site for ATP; that stretch reads SGGVDSS.

In terms of assembly, homodimer.

It carries out the reaction XMP + L-glutamine + ATP + H2O = GMP + L-glutamate + AMP + diphosphate + 2 H(+). It participates in purine metabolism; GMP biosynthesis; GMP from XMP (L-Gln route): step 1/1. Catalyzes the synthesis of GMP from XMP. This is GMP synthase [glutamine-hydrolyzing] from Clostridium botulinum (strain Okra / Type B1).